The following is a 105-amino-acid chain: Malonate decarboxylase acyl carrier protein (105 aa).

Ser-28 is subject to O-(phosphoribosyl dephospho-coenzyme A)serine.

Belongs to the MdcC family. Covalently binds the prosthetic group of malonate decarboxylase.

Its subcellular location is the cytoplasm. In terms of biological role, subunit of malonate decarboxylase, it is an acyl carrier protein to which acetyl and malonyl thioester residues are bound via a 2'-(5''-phosphoribosyl)-3'-dephospho-CoA prosthetic group and turn over during the catalytic mechanism. In Xanthomonas euvesicatoria pv. vesicatoria (strain 85-10) (Xanthomonas campestris pv. vesicatoria), this protein is Malonate decarboxylase acyl carrier protein.